The primary structure comprises 382 residues: F-box/kelch-repeat protein At3g16580 (382 aa).

An F-box domain is found at 9–55; the sequence is WEFSLSLPWELIEEILSRVPPESLLRFKTVSKQWNALFRDKTFINNH. Kelch repeat units lie at residues 150–196 and 334–381; these read KIFA…NIYT and WIYV…AELQ.

The chain is F-box/kelch-repeat protein At3g16580 from Arabidopsis thaliana (Mouse-ear cress).